A 75-amino-acid polypeptide reads, in one-letter code: Sec-independent protein translocase protein TatA (75 aa).

Residues 1-21 (MGSMSIWHWIVVLAVVLLLFG) traverse the membrane as a helical segment. A disordered region spans residues 43–75 (MAEDDDAPAKPAEPPRAVPHQATPAPESEKKAV).

Belongs to the TatA/E family. The Tat system comprises two distinct complexes: a TatABC complex, containing multiple copies of TatA, TatB and TatC subunits, and a separate TatA complex, containing only TatA subunits. Substrates initially bind to the TatABC complex, which probably triggers association of the separate TatA complex to form the active translocon.

It localises to the cell inner membrane. Its function is as follows. Part of the twin-arginine translocation (Tat) system that transports large folded proteins containing a characteristic twin-arginine motif in their signal peptide across membranes. TatA could form the protein-conducting channel of the Tat system. In Azorhizobium caulinodans (strain ATCC 43989 / DSM 5975 / JCM 20966 / LMG 6465 / NBRC 14845 / NCIMB 13405 / ORS 571), this protein is Sec-independent protein translocase protein TatA.